We begin with the raw amino-acid sequence, 656 residues long: Probable Xaa-Pro aminopeptidase P (656 aa).

Residues Asp-453, Asp-464, Glu-562, and Glu-576 each coordinate Mn(2+).

This sequence belongs to the peptidase M24B family. It depends on Mn(2+) as a cofactor.

It catalyses the reaction Release of any N-terminal amino acid, including proline, that is linked to proline, even from a dipeptide or tripeptide.. Its function is as follows. Catalyzes the removal of a penultimate prolyl residue from the N-termini of peptides. The chain is Probable Xaa-Pro aminopeptidase P (ampp) from Pyrenophora teres f. teres (strain 0-1) (Barley net blotch fungus).